The following is a 475-amino-acid chain: Ribulose bisphosphate carboxylase large chain (475 aa).

Residues 1–2 (MS) constitute a propeptide that is removed on maturation. Pro3 is subject to N-acetylproline. The residue at position 14 (Lys14) is an N6,N6,N6-trimethyllysine. Substrate is bound by residues Asn123 and Thr173. Residue Lys175 is the Proton acceptor of the active site. Lys177 contributes to the substrate binding site. 3 residues coordinate Mg(2+): Lys201, Asp203, and Glu204. Lys201 bears the N6-carboxylysine mark. Catalysis depends on His294, which acts as the Proton acceptor. Substrate-binding residues include Arg295, His327, and Ser379.

This sequence belongs to the RuBisCO large chain family. Type I subfamily. Heterohexadecamer of 8 large chains and 8 small chains; disulfide-linked. The disulfide link is formed within the large subunit homodimers. It depends on Mg(2+) as a cofactor. In terms of processing, the disulfide bond which can form in the large chain dimeric partners within the hexadecamer appears to be associated with oxidative stress and protein turnover.

The protein resides in the plastid. Its subcellular location is the chloroplast. It carries out the reaction 2 (2R)-3-phosphoglycerate + 2 H(+) = D-ribulose 1,5-bisphosphate + CO2 + H2O. The catalysed reaction is D-ribulose 1,5-bisphosphate + O2 = 2-phosphoglycolate + (2R)-3-phosphoglycerate + 2 H(+). Functionally, ruBisCO catalyzes two reactions: the carboxylation of D-ribulose 1,5-bisphosphate, the primary event in carbon dioxide fixation, as well as the oxidative fragmentation of the pentose substrate in the photorespiration process. Both reactions occur simultaneously and in competition at the same active site. This is Ribulose bisphosphate carboxylase large chain from Pelargonium hortorum (Common geranium).